A 266-amino-acid polypeptide reads, in one-letter code: Glucosamine-6-phosphate deaminase (266 aa).

D72 functions as the Proton acceptor; for enolization step in the catalytic mechanism. The active-site For ring-opening step is the D141. Residue H143 is the Proton acceptor; for ring-opening step of the active site. Residue E148 is the For ring-opening step of the active site.

Belongs to the glucosamine/galactosamine-6-phosphate isomerase family. NagB subfamily. In terms of assembly, homohexamer.

The enzyme catalyses alpha-D-glucosamine 6-phosphate + H2O = beta-D-fructose 6-phosphate + NH4(+). It participates in amino-sugar metabolism; N-acetylneuraminate degradation; D-fructose 6-phosphate from N-acetylneuraminate: step 5/5. Allosterically activated by N-acetylglucosamine 6-phosphate (GlcNAc6P). In terms of biological role, catalyzes the reversible isomerization-deamination of glucosamine 6-phosphate (GlcN6P) to form fructose 6-phosphate (Fru6P) and ammonium ion. This is Glucosamine-6-phosphate deaminase from Serratia proteamaculans (strain 568).